Consider the following 44-residue polypeptide: Phosphatase RapA inhibitor (44 aa).

A propeptide spanning residues Met-1 to Ala-39 is cleaved from the precursor.

This sequence belongs to the Phr family. As to quaternary structure, interacts with RapA and inhibits its interaction with Spo0F. Post-translationally, secreted with a propeptide domain, which is cleaved in the cell wall by the secreted serine proteases subtilisin and Vpr to produce a mature signaling peptide. Contains a predicted signal peptide cleavage site in the N-terminal region, however the propeptide is probably subject to only one processing event, at the N-terminal end of the mature peptide.

It localises to the secreted. Its subcellular location is the cytoplasm. Its activity is regulated as follows. Inhibition of RapA requires a free carboxylate group at the C-terminal end of the PhrA pentapeptide. A free C-terminal carboxylic acid PhrA pentapeptide inhibits RapA phosphatase activity at a 1:1 ratio and is approximately 200 fold more active than a C-terminal amide peptide. Its function is as follows. Signaling molecule involved in the regulation of sporulation. Secreted during production, but the mature peptide acts intracellularly, indicating that it needs to be imported into the cell to function. Inhibitor of the RapA phosphatase activity. Does not act on RapB. The sequence is that of Phosphatase RapA inhibitor from Bacillus subtilis (strain 168).